The chain runs to 1036 residues: Zinc finger protein 532 (1036 aa).

Disordered regions lie at residues 26–92 (PKAA…LHNG), 106–206 (GAKS…EAES), 220–265 (RKAE…PSSK), and 281–362 (AASD…KVRI). The span at 32–52 (SGHDDHESHIKQNAHVDDDSH) shows a compositional bias: basic and acidic residues. Residues serine 130, serine 133, and serine 134 each carry the phosphoserine modification. Positions 136–151 (EEFEDDEKIEVDDPPD) are enriched in acidic residues. Residue lysine 175 is modified to N6-acetyllysine. The segment covering 182–193 (ENSSKTGVSTSG) has biased composition (polar residues). Composition is skewed to basic and acidic residues over residues 194–205 (HTDKNKVKREAE) and 220–249 (RKAE…EKSD). Low complexity predominate over residues 253 to 265 (AAAASSKTKPSSK). Residues 302–314 (EVNDSPKAADKSP) are compositionally biased toward basic and acidic residues. Serine 306 and serine 313 each carry phosphoserine. Over residues 336–353 (SVSSENSSKGSPSSPVGS) the composition is skewed to low complexity. Residue serine 433 is modified to Phosphoserine. Glycyl lysine isopeptide (Lys-Gly) (interchain with G-Cter in SUMO2) cross-links involve residues lysine 458 and lysine 515. A C2H2-type 1; degenerate zinc finger spans residues 615–634 (YKCLECGDAFALEKSLSQHY). The segment at 751-775 (LKCLECNEVFQDEPSLATHFQHAAD) adopts a C2H2-type 2; degenerate zinc-finger fold. The C2H2-type 3 zinc finger occupies 784 to 807 (HPCRQCDKSFSSSHSLCRHNRIKH). The C2H2-type 4; degenerate zinc finger occupies 814–840 (YACSHCPDSRRTFTKRLMLERHIQLMH). A disordered region spans residues 847–877 (VKELSDDAGDVTNDEEEEAEIKEDAKVPSPK). The span at 852-867 (DDAGDVTNDEEEEAEI) shows a compositional bias: acidic residues. Basic and acidic residues predominate over residues 868–877 (KEDAKVPSPK). Serine 875 is modified (phosphoserine). Residues lysine 879 and lysine 902 each participate in a glycyl lysine isopeptide (Lys-Gly) (interchain with G-Cter in SUMO2) cross-link. 2 consecutive C2H2-type zinc fingers follow at residues 938 to 961 (HQCR…FIVH) and 999 to 1021 (RKCK…MRTH). Residues 966-1000 (PQPVSKQNGAGEDSQQENKPSPEDEAAEGAASDRK) are disordered.

Belongs to the krueppel C2H2-type zinc-finger protein family.

The protein localises to the nucleus. Functionally, may be involved in transcriptional regulation. The protein is Zinc finger protein 532 (Znf532) of Mus musculus (Mouse).